A 472-amino-acid polypeptide reads, in one-letter code: MATNSSTEQSLTKKVWNLATTLAGQGIGFTDYITQLTYLLFLKMDAENVEMFGEESAIPTGYQWADLIAFDGLDLVKQYEETLKLLSELDNLIGTIYTKAQNKIDKPVYLKKVITMIDEEQWLIMDGDVKGAIYESILEKNGQDKKSGAGQYFTPRPLIQAMVDCINPQMGETVCDPACGTGGFLLTAYDYMKGQSASKEKRDFLRDKALHGVDNTPLVVTLASMNLYLHGIGTDRSPIVCEDSLEKEPSTLVDVILANPPFGTRPAGSVDINRPDFYVETKNNQLNFLQHMMLMLKTGGRAAVVLPDNVLFEAGAGETIRKRLLQDFNLHTILRLPTGIFYAQGVKANVLFFSKGQPTKEIWFYDYRTDIKHTLATNKLERHHLDDFVSCYNNRVEIYDAENNPQGRWRKYPVDEIIARDKTSLDITWIKPGGEVDDRSLAELMADIKDKSQTISRAVTELEKLLANIEEN.

Residues 151–156 (QYFTPR), 181–183 (TGG), aspartate 214, and 243–244 (DS) contribute to the S-adenosyl-L-methionine site.

Belongs to the N(4)/N(6)-methyltransferase family. As to quaternary structure, the type I restriction/modification system is composed of three polypeptides R, M and S; the restriction enzyme has stoichiometry R(2)M(2)S(1) while the methyltransferase is M(2)S(1).

It catalyses the reaction a 2'-deoxyadenosine in DNA + S-adenosyl-L-methionine = an N(6)-methyl-2'-deoxyadenosine in DNA + S-adenosyl-L-homocysteine + H(+). In terms of biological role, the subtype gamma methyltransferase (M) subunit of a type I restriction enzyme. The M and S subunits together form a methyltransferase (MTase) that methylates two adenine residues of an undetermined sequence. In the presence of the R subunit the complex can also act as an endonuclease, binding to the same target sequence but cutting the DNA some distance from this site. Whether the DNA is cut or modified depends on the methylation state of the target sequence. When the target site is unmodified, the DNA is cut. When the target site is hemimethylated, the complex acts as a maintenance MTase modifying the DNA so that both strands become methylated. After locating a non-methylated recognition site, the enzyme complex serves as a molecular motor that translocates DNA in an ATP-dependent manner until a collision occurs that triggers cleavage. This Bacteroides thetaiotaomicron (strain ATCC 29148 / DSM 2079 / JCM 5827 / CCUG 10774 / NCTC 10582 / VPI-5482 / E50) protein is Type I restriction enzyme BthVORF4518P methylase subunit.